Consider the following 101-residue polypeptide: Aspartyl/glutamyl-tRNA(Asn/Gln) amidotransferase subunit C (101 aa).

This sequence belongs to the GatC family. In terms of assembly, heterotrimer of A, B and C subunits.

The enzyme catalyses L-glutamyl-tRNA(Gln) + L-glutamine + ATP + H2O = L-glutaminyl-tRNA(Gln) + L-glutamate + ADP + phosphate + H(+). The catalysed reaction is L-aspartyl-tRNA(Asn) + L-glutamine + ATP + H2O = L-asparaginyl-tRNA(Asn) + L-glutamate + ADP + phosphate + 2 H(+). In terms of biological role, allows the formation of correctly charged Asn-tRNA(Asn) or Gln-tRNA(Gln) through the transamidation of misacylated Asp-tRNA(Asn) or Glu-tRNA(Gln) in organisms which lack either or both of asparaginyl-tRNA or glutaminyl-tRNA synthetases. The reaction takes place in the presence of glutamine and ATP through an activated phospho-Asp-tRNA(Asn) or phospho-Glu-tRNA(Gln). The chain is Aspartyl/glutamyl-tRNA(Asn/Gln) amidotransferase subunit C from Lactobacillus delbrueckii subsp. bulgaricus (strain ATCC 11842 / DSM 20081 / BCRC 10696 / JCM 1002 / NBRC 13953 / NCIMB 11778 / NCTC 12712 / WDCM 00102 / Lb 14).